A 151-amino-acid chain; its full sequence is Probable ubiquitin-conjugating enzyme E2 W-B (151 aa).

Residues 3 to 151 form the UBC core domain; sequence SMQKRLQKEL…TKWWYHDDTC (149 aa). The Glycyl thioester intermediate role is filled by Cys91.

It belongs to the ubiquitin-conjugating enzyme family.

The protein resides in the nucleus. It catalyses the reaction S-ubiquitinyl-[E1 ubiquitin-activating enzyme]-L-cysteine + [E2 ubiquitin-conjugating enzyme]-L-cysteine = [E1 ubiquitin-activating enzyme]-L-cysteine + S-ubiquitinyl-[E2 ubiquitin-conjugating enzyme]-L-cysteine.. It carries out the reaction S-ubiquitinyl-[E1 ubiquitin-activating enzyme]-L-cysteine + [acceptor protein]-N-terminal-amino acid = [E1 ubiquitin-activating enzyme]-L-cysteine + N-terminal-ubiquitinyl-[acceptor protein].. Its pathway is protein modification; protein ubiquitination. Accepts ubiquitin from the E1 complex and catalyzes its covalent attachment to other proteins. Catalyzes monoubiquitination. Involved in degradation of misfolded chaperone substrate and DNA repair. In Danio rerio (Zebrafish), this protein is Probable ubiquitin-conjugating enzyme E2 W-B (ube2wb).